The following is a 131-amino-acid chain: Agouti-signaling protein (131 aa).

A signal peptide spans 1–22 (MDVTRLLLATLVGFLCFLTVHS). N-linked (GlcNAc...) asparagine glycosylation occurs at Asn39. Positions 58-96 (KSKKISRKEAEKRKRSSKKKASIKKVARPPPPSPCVATR) are disordered. The segment covering 70–84 (RKRSSKKKASIKKVA) has biased composition (basic residues). 5 disulfides stabilise this stretch: Cys92–Cys107, Cys99–Cys113, Cys106–Cys124, Cys110–Cys131, and Cys115–Cys122. The Agouti domain maps to 92 to 131 (CVATRDSCKPPAPACCNPCASCQCRFFGSACTCRVLNPNC).

It is found in the secreted. Functionally, involved in the regulation of melanogenesis. The binding of ASP to MC1R precludes alpha-MSH initiated signaling and thus blocks production of cAMP, leading to a down-regulation of eumelanogenesis (brown/black pigment) and thus increasing synthesis of pheomelanin (yellow/red pigment). This is Agouti-signaling protein from Rattus norvegicus (Rat).